The primary structure comprises 125 residues: Small ribosomal subunit protein uS13 (125 aa).

The interval 97–125 (PVRGQKTRSNARTRKGPRPSRIKTKKKSS) is disordered. Over residues 101–125 (QKTRSNARTRKGPRPSRIKTKKKSS) the composition is skewed to basic residues.

This sequence belongs to the universal ribosomal protein uS13 family. In terms of assembly, part of the 30S ribosomal subunit. Forms a loose heterodimer with protein S19. Forms two bridges to the 50S subunit in the 70S ribosome.

Located at the top of the head of the 30S subunit, it contacts several helices of the 16S rRNA. In the 70S ribosome it contacts the 23S rRNA (bridge B1a) and protein L5 of the 50S subunit (bridge B1b), connecting the 2 subunits; these bridges are implicated in subunit movement. Contacts the tRNAs in the A and P-sites. The polypeptide is Small ribosomal subunit protein uS13 (Thermotoga neapolitana (strain ATCC 49049 / DSM 4359 / NBRC 107923 / NS-E)).